We begin with the raw amino-acid sequence, 560 residues long: Nucleoprotein (560 aa).

Residues 53 to 236 (MRKDKRTDTD…ITQEQSQINV (184 aa)) are binding site for the cap structure m7GTP. A disordered region spans residues 333–353 (LTDTGSPNHPPVRNGGSPRLS). The Mn(2+) site is built by Asp-379 and Glu-381. The Zn(2+) site is built by Glu-389, Cys-496, His-499, and Cys-520. A Mn(2+)-binding site is contributed by Asp-524.

It belongs to the arenaviridae nucleocapsid protein family. As to quaternary structure, homomultimerizes to form the nucleocapsid. Binds to viral genomic RNA. Interacts with glycoprotein G2. Interacts with protein Z; this interaction probably directs the encapsidated genome to budding sites. Interacts with protein L; this interaction does not interfere with Z-L interaction. Interacts with host IKBKE (via Protein kinase domain); the interaction inhibits IKBKE kinase activity.

The protein localises to the virion. It localises to the host cytoplasm. Functionally, encapsidates the genome, protecting it from nucleases. The encapsidated genomic RNA is termed the nucleocapsid (NC). Serves as template for viral transcription and replication. The increased presence of protein N in host cell does not seem to trigger the switch from transcription to replication as observed in other negative strain RNA viruses. Through the interaction with host IKBKE, strongly inhibits the phosphorylation and nuclear translocation of host IRF3, a protein involved in interferon activation pathway, leading to the inhibition of interferon-beta and IRF3-dependent promoters activation. Also encodes a functional 3'-5' exoribonuclease that degrades preferentially dsRNA substrates and thereby participates in the suppression of interferon induction. The sequence is that of Nucleoprotein from Pirital mammarenavirus (isolate Rat/Venezuela/VAV-488/1995) (PIRV).